A 193-amino-acid polypeptide reads, in one-letter code: Putative 3-methyladenine DNA glycosylase (193 aa).

The protein belongs to the DNA glycosylase MPG family.

This chain is Putative 3-methyladenine DNA glycosylase, found in Nitrosospira multiformis (strain ATCC 25196 / NCIMB 11849 / C 71).